The following is an 819-amino-acid chain: Leucine--tRNA ligase (819 aa).

Positions P42–H52 match the 'HIGH' region motif. The 'KMSKS' region signature appears at K577–S581. ATP is bound at residue K580.

The protein belongs to the class-I aminoacyl-tRNA synthetase family.

It is found in the cytoplasm. The enzyme catalyses tRNA(Leu) + L-leucine + ATP = L-leucyl-tRNA(Leu) + AMP + diphosphate. This is Leucine--tRNA ligase from Saccharophagus degradans (strain 2-40 / ATCC 43961 / DSM 17024).